The primary structure comprises 107 residues: Iron-binding protein IscA (107 aa).

Fe cation is bound by residues Cys35, Cys99, and Cys101.

The protein belongs to the HesB/IscA family. As to quaternary structure, homodimer; may form tetramers and higher multimers. Fe cation is required as a cofactor.

Functionally, is able to transfer iron-sulfur clusters to apo-ferredoxin. Multiple cycles of [2Fe2S] cluster formation and transfer are observed, suggesting that IscA acts catalytically. Recruits intracellular free iron so as to provide iron for the assembly of transient iron-sulfur cluster in IscU in the presence of IscS, L-cysteine and the thioredoxin reductase system TrxA/TrxB. This chain is Iron-binding protein IscA, found in Yersinia enterocolitica serotype O:8 / biotype 1B (strain NCTC 13174 / 8081).